A 492-amino-acid chain; its full sequence is N-succinylglutamate 5-semialdehyde dehydrogenase (492 aa).

Residue G220 to G225 participates in NAD(+) binding. Catalysis depends on residues E243 and C277.

Belongs to the aldehyde dehydrogenase family. AstD subfamily.

The catalysed reaction is N-succinyl-L-glutamate 5-semialdehyde + NAD(+) + H2O = N-succinyl-L-glutamate + NADH + 2 H(+). The protein operates within amino-acid degradation; L-arginine degradation via AST pathway; L-glutamate and succinate from L-arginine: step 4/5. Catalyzes the NAD-dependent reduction of succinylglutamate semialdehyde into succinylglutamate. The chain is N-succinylglutamate 5-semialdehyde dehydrogenase from Salmonella gallinarum (strain 287/91 / NCTC 13346).